A 547-amino-acid polypeptide reads, in one-letter code: Chaperonin GroEL 2 (547 aa).

ATP contacts are provided by residues 29 to 32 (TLGP), 86 to 90 (DGTTT), G418, 482 to 484 (NAA), and D498.

It belongs to the chaperonin (HSP60) family. Forms a cylinder of 14 subunits composed of two heptameric rings stacked back-to-back. Interacts with the co-chaperonin GroES.

The protein resides in the cytoplasm. The catalysed reaction is ATP + H2O + a folded polypeptide = ADP + phosphate + an unfolded polypeptide.. Together with its co-chaperonin GroES, plays an essential role in assisting protein folding. The GroEL-GroES system forms a nano-cage that allows encapsulation of the non-native substrate proteins and provides a physical environment optimized to promote and accelerate protein folding. The protein is Chaperonin GroEL 2 of Corynebacterium efficiens (strain DSM 44549 / YS-314 / AJ 12310 / JCM 11189 / NBRC 100395).